A 420-amino-acid chain; its full sequence is Methyltransferase/ribosomally synthesized cyclic peptide gymnopeptides precursor gymMA1 (420 aa).

A methyltransferase domain region spans residues 1-251 (MQSSTQKQAG…GISTFYIPPK (251 aa)). Active-site residues include Arg72, Tyr76, and Tyr98. S-adenosyl-L-methionine-binding residues include Tyr98, His100, Val103, Ala130, Gln172, Ala213, Ser244, and Thr245. The tract at residues 252 to 378 (ELKDPSMDIM…WALRCAMKKM (127 aa)) is clasp domain. The precursor leader stretch occupies residues 379–392 (PSSFMDEVDANNLP). N-methylvaline is present on residues Val394 and Val396. Gly398 carries the N-methylglycine modification. Val399 carries the post-translational modification N-methylvaline. Position 400 is an N-methylalanine (Ala400). Position 402 is an N-methylglycine (Gly402). Residues Val404, Val406, Val408, and Val410 each carry the N-methylvaline modification.

This sequence in the N-terminal section; belongs to the precorrin methyltransferase family. As to quaternary structure, homodimer. In terms of processing, gymMA1 automethylates at Val-394, Val-396, Gly-398, Val-399, Ala-400, Gly-402, Val-404, Val-406, Val-408 and Val-410 before being processed by a prolyloligopeptidase which likely forms a peptidyl ester upon removal of the follower propeptide, which then undergoes macrocyclization with the N-terminus of the modified core peptide. Peptide backbone alpha-N-methylations change the physicochemical properties of amide bonds to provide structural constraints and other favorable characteristics including biological membrane permeability to peptides.

It functions in the pathway mycotoxin biosynthesis. In terms of biological role, fusion protein of the methyltransferase gymM1 and the gymnopeptides precursor; part of the gene cluster that mediates the biosynthesis of gymnopeptides, highly methylated cyclic octadecapeptides with striking antiproliferative activity on several human cancer cell lines. Gymnopeptides derive from the C-terminus of the gymMA1 protein, and it is the gymMA1 protein that methylates its own C-terminus using S-adenosyl methionine (SAM). The C-terminus is subsequently cleaved off and macrocyclized by a prolyloligopeptidase to give the final product. This chain is Methyltransferase/ribosomally synthesized cyclic peptide gymnopeptides precursor gymMA1, found in Gymnopus fusipes (Spindle toughshank).